The chain runs to 504 residues: Pentatricopeptide repeat-containing protein At1g05600 (504 aa).

PPR repeat units follow at residues 45 to 79 (NGSVYATMIDILGKSNRVLEMKYVIERMKEDSCEC), 80 to 114 (KDSVFASVIRTFSRAGRLEDAISLFKSLHEFNCVN), 115 to 145 (WSLSFDTLLQEMVKESELEAACHIFRKYCYG), 151 to 185 (RITALNLLMKVLCQVNRSDLASQVFQEMNYQGCYP), 186 to 216 (DRDSYRILMKGFCLEGKLEEATHLLYSMFWR), 225 to 259 (DIVVYRILLDALCDAGEVDDAIEILGKILRKGLKA), 260 to 296 (PKRCYHHIEAGHWESSSEGIERVKRLLTETLIRGAIP), 297 to 331 (CLDSYSAMATDLFEEGKLVEGEEVLLAMRSKGFEP), 332 to 367 (TPFIYGAKVKALCRAGKLKEAVSVINKEMMQGHCLP), 368 to 398 (TVGVYNVLIKGLCDDGKSMEAVGYLKKMSKQ), 404 to 438 (NEETYQTLVDGLCRDGQFLEASQVMEEMLIKSHFP), and 439 to 473 (GVETYHMMIKGLCDMDRRYEAVMWLEEMVSQDMVP).

This sequence belongs to the PPR family. P subfamily.

This Arabidopsis thaliana (Mouse-ear cress) protein is Pentatricopeptide repeat-containing protein At1g05600.